The following is a 761-amino-acid chain: Phosphoribosylformylglycinamidine synthase subunit PurL (761 aa).

Histidine 49 is a catalytic residue. ATP is bound by residues tyrosine 52 and lysine 92. Residue glutamate 94 coordinates Mg(2+). Substrate-binding positions include serine 95–histidine 98 and arginine 117. Histidine 96 functions as the Proton acceptor in the catalytic mechanism. Aspartate 118 provides a ligand contact to Mg(2+). Residue glutamine 241 participates in substrate binding. Aspartate 269 contributes to the Mg(2+) binding site. Glutamate 318–glutamine 320 provides a ligand contact to substrate. ATP-binding residues include asparagine 502 and glycine 539. Asparagine 540 provides a ligand contact to Mg(2+). Residue serine 542 coordinates substrate.

The protein belongs to the FGAMS family. As to quaternary structure, monomer. Part of the FGAM synthase complex composed of 1 PurL, 1 PurQ and 2 PurS subunits.

The protein localises to the cytoplasm. The catalysed reaction is N(2)-formyl-N(1)-(5-phospho-beta-D-ribosyl)glycinamide + L-glutamine + ATP + H2O = 2-formamido-N(1)-(5-O-phospho-beta-D-ribosyl)acetamidine + L-glutamate + ADP + phosphate + H(+). It functions in the pathway purine metabolism; IMP biosynthesis via de novo pathway; 5-amino-1-(5-phospho-D-ribosyl)imidazole from N(2)-formyl-N(1)-(5-phospho-D-ribosyl)glycinamide: step 1/2. Its function is as follows. Part of the phosphoribosylformylglycinamidine synthase complex involved in the purines biosynthetic pathway. Catalyzes the ATP-dependent conversion of formylglycinamide ribonucleotide (FGAR) and glutamine to yield formylglycinamidine ribonucleotide (FGAM) and glutamate. The FGAM synthase complex is composed of three subunits. PurQ produces an ammonia molecule by converting glutamine to glutamate. PurL transfers the ammonia molecule to FGAR to form FGAM in an ATP-dependent manner. PurS interacts with PurQ and PurL and is thought to assist in the transfer of the ammonia molecule from PurQ to PurL. This is Phosphoribosylformylglycinamidine synthase subunit PurL from Chlorobium luteolum (strain DSM 273 / BCRC 81028 / 2530) (Pelodictyon luteolum).